A 217-amino-acid polypeptide reads, in one-letter code: 3-dehydroquinate dehydratase (217 aa).

3-dehydroquinate-binding positions include 26-28 (EFR) and arginine 59. Histidine 114 serves as the catalytic Proton donor/acceptor. Lysine 140 serves as the catalytic Schiff-base intermediate with substrate. Positions 178 and 201 each coordinate 3-dehydroquinate.

The protein belongs to the type-I 3-dehydroquinase family. In terms of assembly, homodimer.

It carries out the reaction 3-dehydroquinate = 3-dehydroshikimate + H2O. Its pathway is metabolic intermediate biosynthesis; chorismate biosynthesis; chorismate from D-erythrose 4-phosphate and phosphoenolpyruvate: step 3/7. In terms of biological role, involved in the third step of the chorismate pathway, which leads to the biosynthesis of aromatic amino acids. Catalyzes the cis-dehydration of 3-dehydroquinate (DHQ) and introduces the first double bond of the aromatic ring to yield 3-dehydroshikimate. The sequence is that of 3-dehydroquinate dehydratase from Hydrogenobaculum sp. (strain Y04AAS1).